The chain runs to 391 residues: MGSLGAILKHPDDFYPLLKLKIAARHAEKQIPSEPHWAFCYSMLHKVSRSFGLVIQQLGPQLRDAVCIFYLVLRALDTVEDDTSISTEVKVPIVMAFHCHIYDNDWHFSCGTKEYKVLMDEFHHVSNAFLDLGSSYKEAIEDITMRMGAGMAKFICKEVETIDDYDEYCHYVAGLVGLGLSKLFHASGAEDLATDSLSNSMGLFLQKTNIIRDYLEDINEIPKSRMFWPRQIWSKYVDKLEDLKYEENSAKAVQCLNDMVTDALVHAEDCLKYMSDLRGPAIFRFCAIPQIMAIGTLALCFNNTQVFRGVVKMRRGLTAKVIDQTKTMSDVYGAFFDFSCLLKSKVDNNDPNATKTLSRLEAIQKTCKESGTLSKRFCVFDFPLETIFYRV.

Belongs to the phytoene/squalene synthase family. Requires Mg(2+) as cofactor. Mn(2+) serves as cofactor.

It localises to the endoplasmic reticulum. It catalyses the reaction 2 (2E,6E)-farnesyl diphosphate + NADH + H(+) = squalene + 2 diphosphate + NAD(+). It carries out the reaction 2 (2E,6E)-farnesyl diphosphate + NADPH + H(+) = squalene + 2 diphosphate + NADP(+). The protein operates within terpene metabolism; lanosterol biosynthesis; lanosterol from farnesyl diphosphate: step 1/3. In terms of biological role, component of the triterpene saponins (e.g. ginsenosides or panaxosides) and phytosterols biosynthetic pathways. Catalyzes the biosynthesis of squalene. The chain is Squalene synthase 8 from Panax ginseng (Korean ginseng).